Here is a 698-residue protein sequence, read N- to C-terminus: Protein CRAC (698 aa).

The region spanning 22-122 (DVSYSSIMKK…FLTLLIARIR (101 aa)) is the PH domain. Residues 594 to 630 (TGGGSVPSSQSTNNLQSSTSSMSSLSSSSTSTTKRSH) form a disordered region. The span at 601 to 626 (SSQSTNNLQSSTSSMSSLSSSSTSTT) shows a compositional bias: low complexity.

It is found in the cytoplasm. In terms of biological role, couples activated G protein to adenylyl cyclase signal transduction from surface cAMP receptor. Pianissimo a cytosolic regulator and CRAC, are both essential for activation of the enzyme adenylyl cyclase. Pianissimo and CRAC do not function redundantly. Both proteins are integral components of the adenylyl cyclase activation pathway. This chain is Protein CRAC (dagA), found in Dictyostelium discoideum (Social amoeba).